The sequence spans 359 residues: Nicotinate-nucleotide--dimethylbenzimidazole phosphoribosyltransferase (359 aa).

The Proton acceptor role is filled by Glu318.

It belongs to the CobT family. In terms of assembly, homodimer.

The catalysed reaction is 5,6-dimethylbenzimidazole + nicotinate beta-D-ribonucleotide = alpha-ribazole 5'-phosphate + nicotinate + H(+). The protein operates within nucleoside biosynthesis; alpha-ribazole biosynthesis; alpha-ribazole from 5,6-dimethylbenzimidazole: step 1/2. Catalyzes the synthesis of alpha-ribazole-5'-phosphate from nicotinate mononucleotide (NAMN) and 5,6-dimethylbenzimidazole (DMB). In Escherichia coli (strain UTI89 / UPEC), this protein is Nicotinate-nucleotide--dimethylbenzimidazole phosphoribosyltransferase.